A 339-amino-acid polypeptide reads, in one-letter code: Delta(9)-fatty-acid desaturase fat-6 (339 aa).

A run of 4 helical transmembrane segments spans residues 52–72 (VALF…LIFE), 77–97 (TVIF…AGAH), 195–215 (YFPL…VYFW), and 219–241 (AFIA…TWCI).

Belongs to the fatty acid desaturase type 1 family. In terms of tissue distribution, expressed in the intestine in adult worms and in all four larval stages. Additional expression in the hypodermis in all life stages.

It is found in the membrane. The enzyme catalyses octadecanoyl-CoA + 2 Fe(II)-[cytochrome b5] + O2 + 2 H(+) = (9Z)-octadecenoyl-CoA + 2 Fe(III)-[cytochrome b5] + 2 H2O. It carries out the reaction hexadecanoyl-CoA + 2 Fe(II)-[cytochrome b5] + O2 + 2 H(+) = (9Z)-hexadecenoyl-CoA + 2 Fe(III)-[cytochrome b5] + 2 H2O. The catalysed reaction is heptadecanoyl-CoA + 2 Fe(II)-[cytochrome b5] + O2 + 2 H(+) = (9Z)-heptadecenoyl-CoA + 2 Fe(III)-[cytochrome b5] + 2 H2O. It catalyses the reaction (11E)-octadecenoyl-CoA + 2 Fe(II)-[cytochrome b5] + O2 + 2 H(+) = (9Z,11E)-octadecadienoyl-CoA + 2 Fe(III)-[cytochrome b5] + 2 H2O. It participates in lipid metabolism; monounsaturated fatty acid biosynthesis. Its pathway is lipid metabolism; fatty acid metabolism. Its function is as follows. Delta(9)-fatty acid desaturase that acts preferentially on stearoyl-CoA (octadecanoyl-CoA) producing the monounsaturated oleoyl-CoA ((9Z)-octadecenoyl-CoA), one of the most abundant monounsaturated fatty acid in Caenorhabditis elegans phospholipids and triacylglycerols. Also acts on palmitoyl-CoA (hexadecanoyl-CoA), heptadecanoyl-CoA and (11E)-octadecenoyl-CoA (trans-vaccenoyl-CoA), the monounsaturated fatty acids (MUFAs) produced are further used as substrates to synthesize polyunsaturated fatty acids (PUFAs) by several other desaturases and elongases. Unlike plants, Caenorhabditis elegans desaturases seem to use fatty acyl-CoAs as substrates. The protein is Delta(9)-fatty-acid desaturase fat-6 (fat-6) of Caenorhabditis elegans.